A 397-amino-acid chain; its full sequence is Elongation factor Tu (397 aa).

A tr-type G domain is found at Lys10–Gln207. Residues Gly19–Thr26 form a G1 region. GTP is bound at residue Gly19–Thr26. Position 26 (Thr26) interacts with Mg(2+). Residues Gly60 to Ala64 are G2. Residues Asp81 to Gly84 form a G3 region. GTP contacts are provided by residues Asp81–His85 and Asn136–Asp139. Positions Asn136–Asp139 are G4. A G5 region spans residues Ser174–Leu176.

It belongs to the TRAFAC class translation factor GTPase superfamily. Classic translation factor GTPase family. EF-Tu/EF-1A subfamily. Monomer.

The protein localises to the cytoplasm. The catalysed reaction is GTP + H2O = GDP + phosphate + H(+). Functionally, GTP hydrolase that promotes the GTP-dependent binding of aminoacyl-tRNA to the A-site of ribosomes during protein biosynthesis. The chain is Elongation factor Tu from Nitratidesulfovibrio vulgaris (strain ATCC 29579 / DSM 644 / CCUG 34227 / NCIMB 8303 / VKM B-1760 / Hildenborough) (Desulfovibrio vulgaris).